Here is a 211-residue protein sequence, read N- to C-terminus: SAGA-associated factor 11 homolog 1 (211 aa).

The segment at C115–C136 adopts an SGF11-type zinc-finger fold. The segment at R149 to F211 is disordered. Positions S157–T166 are enriched in low complexity. At S187 the chain carries Phosphoserine. Over residues S197 to F211 the composition is skewed to low complexity.

It belongs to the SGF11 family. In terms of assembly, component of some SAGA transcription coactivator-HAT complexes, at least composed of Ada2b, not/nonstop, Pcaf/Gcn5, Sgf11 and Spt3. Within the SAGA complex, Sgf11, e(y)2, and not/nonstop form an additional subcomplex of SAGA called the DUB module (deubiquitination module). Interacts directly with not/nonstop. Interacts with the AMEX complex component xmas-2. Interacts with Cbp80; important for promoter recruitment of Sgf11 that is not associated with the DUB module.

The protein localises to the nucleus. It is found in the nucleoplasm. It localises to the cytoplasm. In terms of biological role, component of the transcription regulatory histone acetylation (HAT) complex SAGA, a multiprotein complex that activates transcription by remodeling chromatin and mediating histone acetylation and deubiquitination. Within the SAGA complex, participates in a subcomplex that specifically deubiquitinates histone H2B. The SAGA complex is recruited to specific gene promoters by activators, where it is required for transcription. Required for nuclear receptor-mediated transactivation. Binds independently on SAGA to promoters in an RNA-dependent manner. Binds to mRNA and is essential for total mRNA export from the nucleus. Required to counteract heterochromatin silencing. Controls the development of neuronal connectivity in visual system by being required for accurate axon targeting in the optic lobe. Required for expression of ecdysone-induced genes such as br/broad. The protein is SAGA-associated factor 11 homolog 1 of Drosophila grimshawi (Hawaiian fruit fly).